The chain runs to 486 residues: Cardiolipin synthase A (486 aa).

A run of 2 helical transmembrane segments spans residues 3–23 and 38–58; these read TFYT…IAGV and MAWL…YLSF. 2 PLD phosphodiesterase domains span residues 219-246 and 399-426; these read MDLR…VDPR and EDGL…DMRS. Catalysis depends on residues histidine 224, lysine 226, aspartate 231, histidine 404, lysine 406, and aspartate 411.

Belongs to the phospholipase D family. Cardiolipin synthase subfamily. ClsA sub-subfamily.

It is found in the cell inner membrane. The catalysed reaction is 2 a 1,2-diacyl-sn-glycero-3-phospho-(1'-sn-glycerol) = a cardiolipin + glycerol. Its function is as follows. Catalyzes the reversible phosphatidyl group transfer from one phosphatidylglycerol molecule to another to form cardiolipin (CL) (diphosphatidylglycerol) and glycerol. The chain is Cardiolipin synthase A from Serratia proteamaculans (strain 568).